Consider the following 1184-residue polypeptide: Fibulin-2 (1184 aa).

The signal sequence occupies residues 1 to 27 (MVLLWEPAGAWLALGLALALGPSVAAA). A subdomain NA (Cys-rich) region spans residues 28-177 (APRQDCTGVE…ELICYQLPGC (150 aa)). The segment at 28–444 (APRQDCTGVE…EGSTKDLIET (417 aa)) is n. The tract at residues 178–444 (HGNFSDAEEG…EGSTKDLIET (267 aa)) is subdomain NB (Cys-free). Asn180 carries an N-linked (GlcNAc...) asparagine glycan. 2 disordered regions span residues 221–293 (VQAG…MAVT) and 399–437 (IPPT…PEGS). A compositionally biased stretch (gly residues) spans 224–236 (GAGGPPAALGGGS). Residues 252–261 (PRPTAAAALG) show a composition bias toward low complexity. Acidic residues predominate over residues 276 to 288 (DSEEEEEEEEERE). At Ser277 the chain carries Phosphoserine. A compositionally biased stretch (polar residues) spans 423-436 (PNSVHSIPRSSPEG). Intrachain disulfides connect Cys445–Cys472, Cys446–Cys479, Cys459–Cys480, Cys489–Cys518, Cys502–Cys519, Cys521–Cys545, Cys522–Cys552, Cys535–Cys553, Cys608–Cys620, Cys616–Cys629, Cys631–Cys644, Cys683–Cys693, Cys689–Cys702, Cys704–Cys717, Cys723–Cys736, Cys730–Cys745, Cys751–Cys762, Cys768–Cys781, Cys775–Cys790, Cys796–Cys808, Cys814–Cys827, Cys821–Cys836, Cys843–Cys856, Cys862–Cys875, Cys869–Cys884, Cys886–Cys899, Cys905–Cys917, Cys913–Cys926, Cys928–Cys941, Cys947–Cys956, Cys952–Cys965, Cys967–Cys980, Cys986–Cys998, Cys994–Cys1007, Cys1009–Cys1023, Cys1029–Cys1042, Cys1036–Cys1051, and Cys1056–Cys1068. 3 consecutive Anaphylatoxin-like domains span residues 445-480 (CCAA…RHCC), 488-519 (SCMA…KQCC), and 521-553 (CCGL…LSCC). The N-linked (GlcNAc...) asparagine glycan is linked to Asn507. The region spanning 604–645 (DQDECLLLPGELCQHLCINTVGSYHCACFPGFSLQDDGRTCR) is the EGF-like 1; calcium-binding domain. Residues 679-718 (QPNTCKDNGPCKQVCSTVGGSAICSCFPGYAIMADGVSCE) enclose the EGF-like 2 domain. An EGF-like 3; calcium-binding domain is found at 719–763 (DINECVTDLHTCSRGEHCVNTLGSFHCYKALTCEPGYALKDGECE). Residues 764-809 (DVDECAMGTHTCQPGFLCQNTKGSFYCQARQRCMDGFLQDPEGNCV) enclose the EGF-like 4; calcium-binding domain. An EGF-like 5; calcium-binding domain is found at 810 to 857 (DINECTSLSEPCRPGFSCINTVGSYTCQRNPLICARGYHASDDGTKCV). Residues 858 to 900 (DVNECETGVHRCGEGQVCHNLPGSYRCDCKAGFQRDAFGRGCI) enclose the EGF-like 6; calcium-binding domain. An EGF-like 7; calcium-binding domain is found at 901–942 (DVNECWASPGRLCQHTCENTLGSYRCSCASGFLLAADGKRCE). The EGF-like 8; calcium-binding domain occupies 943–981 (DVNECEAQRCSQECANIYGSYQCYCRQGYQLAEDGHTCT). Positions 982 to 1024 (DIDECAQGAGILCTFRCLNVPGSYQCACPEQGYTMTANGRSCK) constitute an EGF-like 9; calcium-binding domain. Residues 1025-1069 (DVDECALGTHNCSEAETCHNIQGSFRCLRFECPPNYVQVSKTKCE) enclose the EGF-like 10; calcium-binding domain. A glycan (N-linked (GlcNAc...) asparagine) is linked at Asn1035. Residues 1070 to 1184 (RTTCHDFLEC…MHIFFTTFAL (115 aa)) are domain III.

The protein belongs to the fibulin family. As to quaternary structure, homotrimer; disulfide-linked. Interacts with LAMA2. Interacts with FBN1 (via N-terminal domain). Forms a ternary complex with ELN and FBN1. O-glycosylated with core 1 or possibly core 8 glycans. It is unsure if the O-glycosylation is on Thr-347 or Ser-348. As to expression, component of both basement membranes and other connective tissues. Expressed in heart, placenta and ovary.

Its subcellular location is the secreted. It is found in the extracellular space. The protein localises to the extracellular matrix. Its function is as follows. Its binding to fibronectin and some other ligands is calcium dependent. May act as an adapter that mediates the interaction between FBN1 and ELN. This chain is Fibulin-2 (FBLN2), found in Homo sapiens (Human).